A 165-amino-acid chain; its full sequence is S-ribosylhomocysteine lyase (165 aa).

Residues His54, His58, and Cys128 each contribute to the Fe cation site.

The protein belongs to the LuxS family. In terms of assembly, homodimer. Fe cation serves as cofactor.

It catalyses the reaction S-(5-deoxy-D-ribos-5-yl)-L-homocysteine = (S)-4,5-dihydroxypentane-2,3-dione + L-homocysteine. In terms of biological role, involved in the synthesis of autoinducer 2 (AI-2) which is secreted by bacteria and is used to communicate both the cell density and the metabolic potential of the environment. The regulation of gene expression in response to changes in cell density is called quorum sensing. Catalyzes the transformation of S-ribosylhomocysteine (RHC) to homocysteine (HC) and 4,5-dihydroxy-2,3-pentadione (DPD). The protein is S-ribosylhomocysteine lyase of Helicobacter hepaticus (strain ATCC 51449 / 3B1).